The following is a 253-amino-acid chain: MIREGDKVVLVDPRGKRYLITVSKRDFHTDLGILKLEEIIGRNFGEAIKSHKGHEFKILRPRIVDYLDKMKRGPQIVHPKDAALIVAYAGISPGDFIVEAGVGSGALTLFLANIVGPEGRVVSYEIREDFAKLAWENIKWAGFDDRVTIKLKDIYEGIEEENVDHVILDLPQPERVVEHAAKALKPGGFFVAYTPCSNQVMRLHEKLREFKDYFMKPRTINVLVFDQEVKKECMRPRTTALVHTGYITFARRI.

Residues 104–107 (SGAL), Glu125, Asp153, and Asp169 contribute to the S-adenosyl-L-methionine site.

This sequence belongs to the class I-like SAM-binding methyltransferase superfamily. TRM61 family. In terms of assembly, homotetramer composed of a dimer of dimers; disulfide-linked. Disulfide bonds are important for the stability of TrmI at extreme temperatures.

It catalyses the reaction adenosine(57)/adenosine(58) in tRNA + 2 S-adenosyl-L-methionine = N(1)-methyladenosine(57)/N(1)-methyladenosine(58) in tRNA + 2 S-adenosyl-L-homocysteine + 2 H(+). Its function is as follows. Catalyzes the S-adenosyl-L-methionine-dependent formation of N(1)-methyladenosine at position(s) 57 (m1A57) and 58 (m1A58) in the T-loop of some tRNAs. Methylates the first adenine of an AA sequence. This Pyrococcus abyssi (strain GE5 / Orsay) protein is tRNA (adenine(57)-N(1)/adenine(58)-N(1))-methyltransferase TrmI (trmI).